The primary structure comprises 189 residues: Peptidyl-tRNA hydrolase (189 aa).

Residue Tyr-14 participates in tRNA binding. The active-site Proton acceptor is the His-19. Residues Tyr-64, Asn-66, and Asn-112 each coordinate tRNA.

The protein belongs to the PTH family. Monomer.

It localises to the cytoplasm. The catalysed reaction is an N-acyl-L-alpha-aminoacyl-tRNA + H2O = an N-acyl-L-amino acid + a tRNA + H(+). Hydrolyzes ribosome-free peptidyl-tRNAs (with 1 or more amino acids incorporated), which drop off the ribosome during protein synthesis, or as a result of ribosome stalling. Functionally, catalyzes the release of premature peptidyl moieties from peptidyl-tRNA molecules trapped in stalled 50S ribosomal subunits, and thus maintains levels of free tRNAs and 50S ribosomes. This chain is Peptidyl-tRNA hydrolase, found in Clostridium botulinum (strain ATCC 19397 / Type A).